The following is a 941-amino-acid chain: Bifunctional glutamine synthetase adenylyltransferase/adenylyl-removing enzyme (941 aa).

Positions 1 to 431 (MSSAPPFAAA…TFRNAFRLAG (431 aa)) are adenylyl removase. Residues 447–941 (NGHGMRPHAG…DGTIAQAEVK (495 aa)) are adenylyl transferase.

The protein belongs to the GlnE family. The cofactor is Mg(2+).

It catalyses the reaction [glutamine synthetase]-O(4)-(5'-adenylyl)-L-tyrosine + phosphate = [glutamine synthetase]-L-tyrosine + ADP. The enzyme catalyses [glutamine synthetase]-L-tyrosine + ATP = [glutamine synthetase]-O(4)-(5'-adenylyl)-L-tyrosine + diphosphate. Functionally, involved in the regulation of glutamine synthetase GlnA, a key enzyme in the process to assimilate ammonia. When cellular nitrogen levels are high, the C-terminal adenylyl transferase (AT) inactivates GlnA by covalent transfer of an adenylyl group from ATP to specific tyrosine residue of GlnA, thus reducing its activity. Conversely, when nitrogen levels are low, the N-terminal adenylyl removase (AR) activates GlnA by removing the adenylyl group by phosphorolysis, increasing its activity. The regulatory region of GlnE binds the signal transduction protein PII (GlnB) which indicates the nitrogen status of the cell. The protein is Bifunctional glutamine synthetase adenylyltransferase/adenylyl-removing enzyme of Bordetella bronchiseptica (strain ATCC BAA-588 / NCTC 13252 / RB50) (Alcaligenes bronchisepticus).